The following is a 457-amino-acid chain: Siroheme synthase (457 aa).

Positions Met1–Thr204 are precorrin-2 dehydrogenase /sirohydrochlorin ferrochelatase. NAD(+)-binding positions include Asp22–Val23 and Leu43–Ala44. Ser128 is modified (phosphoserine). Positions Gly216 to His457 are uroporphyrinogen-III C-methyltransferase. Pro225 provides a ligand contact to S-adenosyl-L-methionine. Asp248 acts as the Proton acceptor in catalysis. Catalysis depends on Lys270, which acts as the Proton donor. Residues Gly301 to Asp303, Ile306, Thr331 to Ala332, Met382, and Gly411 each bind S-adenosyl-L-methionine.

This sequence in the N-terminal section; belongs to the precorrin-2 dehydrogenase / sirohydrochlorin ferrochelatase family. It in the C-terminal section; belongs to the precorrin methyltransferase family.

The catalysed reaction is uroporphyrinogen III + 2 S-adenosyl-L-methionine = precorrin-2 + 2 S-adenosyl-L-homocysteine + H(+). It catalyses the reaction precorrin-2 + NAD(+) = sirohydrochlorin + NADH + 2 H(+). The enzyme catalyses siroheme + 2 H(+) = sirohydrochlorin + Fe(2+). It functions in the pathway cofactor biosynthesis; adenosylcobalamin biosynthesis; precorrin-2 from uroporphyrinogen III: step 1/1. Its pathway is cofactor biosynthesis; adenosylcobalamin biosynthesis; sirohydrochlorin from precorrin-2: step 1/1. It participates in porphyrin-containing compound metabolism; siroheme biosynthesis; precorrin-2 from uroporphyrinogen III: step 1/1. The protein operates within porphyrin-containing compound metabolism; siroheme biosynthesis; siroheme from sirohydrochlorin: step 1/1. It functions in the pathway porphyrin-containing compound metabolism; siroheme biosynthesis; sirohydrochlorin from precorrin-2: step 1/1. Its function is as follows. Multifunctional enzyme that catalyzes the SAM-dependent methylations of uroporphyrinogen III at position C-2 and C-7 to form precorrin-2 via precorrin-1. Then it catalyzes the NAD-dependent ring dehydrogenation of precorrin-2 to yield sirohydrochlorin. Finally, it catalyzes the ferrochelation of sirohydrochlorin to yield siroheme. The sequence is that of Siroheme synthase from Escherichia coli O8 (strain IAI1).